The following is a 304-amino-acid chain: Acetyl-coenzyme A carboxylase carboxyl transferase subunit beta (304 aa).

Residues 23-292 enclose the CoA carboxyltransferase N-terminal domain; sequence VWTKCDSCGQ…PNPDAPREGV (270 aa). Positions 27, 30, 46, and 49 each coordinate Zn(2+). The C4-type zinc-finger motif lies at 27-49; sequence CDSCGQVLYRAELERNLEVCPKC. The interval 283–304 is disordered; the sequence is PNPDAPREGVVVPPAPDQESEA.

The protein belongs to the AccD/PCCB family. In terms of assembly, acetyl-CoA carboxylase is a heterohexamer composed of biotin carboxyl carrier protein (AccB), biotin carboxylase (AccC) and two subunits each of ACCase subunit alpha (AccA) and ACCase subunit beta (AccD). Zn(2+) serves as cofactor.

The protein localises to the cytoplasm. The catalysed reaction is N(6)-carboxybiotinyl-L-lysyl-[protein] + acetyl-CoA = N(6)-biotinyl-L-lysyl-[protein] + malonyl-CoA. The protein operates within lipid metabolism; malonyl-CoA biosynthesis; malonyl-CoA from acetyl-CoA: step 1/1. In terms of biological role, component of the acetyl coenzyme A carboxylase (ACC) complex. Biotin carboxylase (BC) catalyzes the carboxylation of biotin on its carrier protein (BCCP) and then the CO(2) group is transferred by the transcarboxylase to acetyl-CoA to form malonyl-CoA. The polypeptide is Acetyl-coenzyme A carboxylase carboxyl transferase subunit beta (Salmonella agona (strain SL483)).